The primary structure comprises 143 residues: Spliceosomal protein DIB1 (143 aa).

Ala-2 carries the N-acetylalanine modification.

Belongs to the DIM1 family. Component of the U4/U6-U5 tri-snRNP complex composed of the U4, U6 and U5 snRNAs and at least PRP3, PRP4, PRP6, PRP8, PRP18, PRP31, PRP38, SNU13, SNU23, SNU66, SNU114, SPP381, SMB1, SMD1, SMD2, SMD3, SMX2, SMX3, LSM2, LSM3, LSM4, LSM5, LSM6, LSM7, LSM8, BRR2 and DIB1.

The protein resides in the nucleus. Functionally, essential role in pre-mRNA splicing. Also essential for entry into mitosis (G2/M progression) as well as for chromosome segregation during mitosis. The chain is Spliceosomal protein DIB1 (DIB1) from Saccharomyces cerevisiae (strain ATCC 204508 / S288c) (Baker's yeast).